The chain runs to 264 residues: Thiazole synthase (264 aa).

The Schiff-base intermediate with DXP role is filled by K106. 1-deoxy-D-xylulose 5-phosphate is bound by residues G167, 193–194, and 215–216; these read AG and NT.

Belongs to the ThiG family. Homotetramer. Forms heterodimers with either ThiH or ThiS.

It is found in the cytoplasm. It carries out the reaction [ThiS sulfur-carrier protein]-C-terminal-Gly-aminoethanethioate + 2-iminoacetate + 1-deoxy-D-xylulose 5-phosphate = [ThiS sulfur-carrier protein]-C-terminal Gly-Gly + 2-[(2R,5Z)-2-carboxy-4-methylthiazol-5(2H)-ylidene]ethyl phosphate + 2 H2O + H(+). Its pathway is cofactor biosynthesis; thiamine diphosphate biosynthesis. Its function is as follows. Catalyzes the rearrangement of 1-deoxy-D-xylulose 5-phosphate (DXP) to produce the thiazole phosphate moiety of thiamine. Sulfur is provided by the thiocarboxylate moiety of the carrier protein ThiS. In vitro, sulfur can be provided by H(2)S. This chain is Thiazole synthase, found in Xylella fastidiosa (strain 9a5c).